The following is a 377-amino-acid chain: MKEKVVSLAQDLIRRPSISPNDEGCQQIIAEGLEKLGFQIEWMPFNDTLNLWAKHGTSEPVIAFVGHTDVVPTGDENQWSSPPFSAEIIDGILYGRGAADMKGSLAAMIVAAEEYVKANPNHKGTIALLITSDEEAAAKDGTIRVVETLMTRDEKITYCMVGEPSSAKNLGDVVKNGRRGSITGNLYIQGIQGHVAYPHLAENPIHKAAPFLQELTTYQWDKGNEFFPPTSLQIANIHAGTGSNNVIPAELYIQFNLRYCTEVTDEIIKQKVAEMLAKHNLKYRIEWNLSGKPFLTKPGKLLDSITSAIEEITGITPKAETGGGTSDGRFIALMGAEVVEFGPLNSSIHKVNECVSVEDLGKCGEIYHKMLVNLLDS.

Residue His-67 coordinates Zn(2+). Residue Asp-69 is part of the active site. Asp-100 is a Zn(2+) binding site. Glu-134 (proton acceptor) is an active-site residue. Glu-135, Glu-163, and His-349 together coordinate Zn(2+).

It belongs to the peptidase M20A family. DapE subfamily. Homodimer. It depends on Zn(2+) as a cofactor. Co(2+) serves as cofactor.

It carries out the reaction N-succinyl-(2S,6S)-2,6-diaminopimelate + H2O = (2S,6S)-2,6-diaminopimelate + succinate. The protein operates within amino-acid biosynthesis; L-lysine biosynthesis via DAP pathway; LL-2,6-diaminopimelate from (S)-tetrahydrodipicolinate (succinylase route): step 3/3. Functionally, catalyzes the hydrolysis of N-succinyl-L,L-diaminopimelic acid (SDAP), forming succinate and LL-2,6-diaminopimelate (DAP), an intermediate involved in the bacterial biosynthesis of lysine and meso-diaminopimelic acid, an essential component of bacterial cell walls. This chain is Succinyl-diaminopimelate desuccinylase, found in Haemophilus influenzae (strain PittEE).